Here is a 137-residue protein sequence, read N- to C-terminus: MSAHLQWMVVRNCSSFLIKRNKQTYSTEPNNLKARNSFRYNGLIHRKTVGVEPAADGKGVVVVMKRRSGQRKPATSYVRTTINKNARATLSSIRHMIRKNKYRPDLRMAAIRRASAILRSQKPVMVKRKPSRPTKSS.

Position 2 is an N-acetylserine (serine 2). Glycyl lysine isopeptide (Lys-Gly) (interchain with G-Cter in SUMO2) cross-links involve residues lysine 58 and lysine 65. Phosphoserine is present on serine 115.

It belongs to the eukaryotic ribosomal protein eL28 family. In terms of assembly, component of the large ribosomal subunit.

The protein localises to the cytoplasm. Component of the large ribosomal subunit. The ribosome is a large ribonucleoprotein complex responsible for the synthesis of proteins in the cell. In Bos taurus (Bovine), this protein is Large ribosomal subunit protein eL28 (RPL28).